The following is a 153-amino-acid chain: Cytochrome c oxidase subunit 5A, mitochondrial (153 aa).

A mitochondrion-targeting transit peptide spans 1 to 20 (MLRNTFTRAGGLSRITSVRF). At 21-88 (AQTHALSNAA…EWGPRRPVLN (68 aa)) the chain is on the mitochondrial matrix side. Residues 89–111 (KGDSSFIAKGVAAGLLFSVGLFA) form a helical membrane-spanning segment. Residues 112-153 (VVRMAGGQDAKTMNKEWQLKSDEYLKSKNANPWGGYSQVQSK) are Mitochondrial intermembrane-facing.

It belongs to the cytochrome c oxidase IV family. In terms of assembly, component of the cytochrome c oxidase (complex IV, CIV), a multisubunit enzyme composed of 12 subunits. The complex is composed of a catalytic core of 3 subunits COX1, COX2 and COX3, encoded in the mitochondrial DNA, and 9 supernumerary subunits COX4, COX5A (or COX5B), COX6, COX7, COX8, COX9, COX12, COX13 and COX26, which are encoded in the nuclear genome. COX5A is the predominant subunit V during aerobic/normoxic growth, it gets replaced by COX5B under anaerobic/hypoxic conditions. The complex exists as a monomer or a dimer and forms supercomplexes (SCs) in the inner mitochondrial membrane with a dimer of ubiquinol-cytochrome c oxidoreductase (cytochrome b-c1 complex, complex III, CIII), resulting in 2 different assemblies (supercomplexes III(2)IV and III(2)IV(2)). COX5A interacts with COR1, CYT1 and QCR6 at the CIII-CIV interface.

It is found in the mitochondrion inner membrane. It participates in energy metabolism; oxidative phosphorylation. In terms of biological role, component of the cytochrome c oxidase, the last enzyme in the mitochondrial electron transport chain which drives oxidative phosphorylation. The respiratory chain contains 3 multisubunit complexes succinate dehydrogenase (complex II, CII), ubiquinol-cytochrome c oxidoreductase (cytochrome b-c1 complex, complex III, CIII) and cytochrome c oxidase (complex IV, CIV), that cooperate to transfer electrons derived from NADH and succinate to molecular oxygen, creating an electrochemical gradient over the inner membrane that drives transmembrane transport and the ATP synthase. Cytochrome c oxidase is the component of the respiratory chain that catalyzes the reduction of oxygen to water. Electrons originating from reduced cytochrome c in the intermembrane space (IMS) are transferred via the dinuclear copper A center (CU(A)) of COX2 and heme A of COX1 to the active site in COX1, a binuclear center (BNC) formed by heme A3 and copper B (CU(B)). The BNC reduces molecular oxygen to 2 water molecules using 4 electrons from cytochrome c in the IMS and 4 protons from the mitochondrial matrix. The polypeptide is Cytochrome c oxidase subunit 5A, mitochondrial (COX5A) (Saccharomyces cerevisiae (strain ATCC 204508 / S288c) (Baker's yeast)).